The following is a 292-amino-acid chain: Ribonuclease T2-like (292 aa).

Positions 1–23 are cleaved as a signal peptide; that stretch reads MAKTASAMLFLYLLLSRCLLSHA. 5 disulfides stabilise this stretch: Cys42–Cys61, Cys50–Cys103, Cys60–Cys177, Cys111–Cys169, and Cys246–Cys280. N-linked (GlcNAc...) asparagine glycosylation is present at Asn52. Catalysis depends on residues His96, Glu162, and His166.

It belongs to the RNase T2 family.

It localises to the vacuole lumen. Its subcellular location is the cytoplasm. It catalyses the reaction a ribonucleotidyl-ribonucleotide-RNA + H2O = a 3'-end 3'-phospho-ribonucleotide-RNA + a 5'-end dephospho-ribonucleoside-RNA + H(+). Rnase which modulates cell survival under stress conditions. Released from the vacuole to the cytoplasm during stress to promote tRNA and rRNA cleavage and to activate separately a downstream pathway that promotes cell death. Involved in cell size, vacuolar morphology and growth at high temperatures and high salt concentration. The chain is Ribonuclease T2-like (RNY1) from Eremothecium gossypii (strain ATCC 10895 / CBS 109.51 / FGSC 9923 / NRRL Y-1056) (Yeast).